The sequence spans 211 residues: FMN-dependent NADH:quinone oxidoreductase 3 (211 aa).

102–105 (MWNF) serves as a coordination point for FMN.

The protein belongs to the azoreductase type 1 family. In terms of assembly, homodimer. Requires FMN as cofactor.

It carries out the reaction 2 a quinone + NADH + H(+) = 2 a 1,4-benzosemiquinone + NAD(+). The catalysed reaction is N,N-dimethyl-1,4-phenylenediamine + anthranilate + 2 NAD(+) = 2-(4-dimethylaminophenyl)diazenylbenzoate + 2 NADH + 2 H(+). Functionally, quinone reductase that provides resistance to thiol-specific stress caused by electrophilic quinones. Also exhibits azoreductase activity. Catalyzes the reductive cleavage of the azo bond in aromatic azo compounds to the corresponding amines. In Bacillus anthracis, this protein is FMN-dependent NADH:quinone oxidoreductase 3.